The sequence spans 241 residues: Small ribosomal subunit protein uS2c (241 aa).

This sequence belongs to the universal ribosomal protein uS2 family.

Its subcellular location is the plastid. The protein localises to the chloroplast. The sequence is that of Small ribosomal subunit protein uS2c (rps2) from Porphyra purpurea (Red seaweed).